A 70-amino-acid polypeptide reads, in one-letter code: MKSKKPNFEFELKNYAIWYDINDAIIKESLCRYIKNILRKEFCGNCSKIKDIELKQKGKDIVVHLQFKLG.

This is an uncharacterized protein from Methanocaldococcus jannaschii (strain ATCC 43067 / DSM 2661 / JAL-1 / JCM 10045 / NBRC 100440) (Methanococcus jannaschii).